The following is a 366-amino-acid chain: Transmembrane protein 25 (366 aa).

A signal peptide spans 1-26 (MALPPGPAALRHTLLLLPALLSSGWG). Topologically, residues 27 to 232 (ELEPQIDGQT…APGLLATRVE (206 aa)) are extracellular. The 94-residue stretch at 30-123 (PQIDGQTWAE…SGRSANASVI (94 aa)) folds into the Ig-like domain. The cysteines at positions 52 and 107 are disulfide-linked. Residues asparagine 106, asparagine 162, asparagine 175, asparagine 192, and asparagine 205 are each glycosylated (N-linked (GlcNAc...) asparagine). A helical transmembrane segment spans residues 233–253 (VPLLGIVVAAGLALGTLVGFS). The Cytoplasmic segment spans residues 254-366 (TLVACLVCRK…SSVSSDEIWL (113 aa)). Residues 299 to 308 (PSNLQLNDLT) are compositionally biased toward polar residues. The segment at 299–335 (PSNLQLNDLTPDSRAVKPADRQMAQNNSRPELLDPEP) is disordered.

As to quaternary structure, interacts with GRIN2B. In terms of tissue distribution, expressed throughout the brain with higher levels in the pyramidal cell layer of the hippocampal CA1 and CA3 regions. Also highly expressed within the hippocampal dentate gyrus region and cerebellum and in scattered neurons in the cerebral cortex.

The protein resides in the cell membrane. Its subcellular location is the secreted. It is found in the late endosome. It localises to the lysosome. In neurons, modulates the degradation of NMDA receptor GRIN2B subunit. Plays a role in the regulation of neuronal excitability. The chain is Transmembrane protein 25 (TMEM25) from Homo sapiens (Human).